Here is a 730-residue protein sequence, read N- to C-terminus: Rap1 GTPase-activating protein 2 (730 aa).

Serine 7 is subject to Phosphoserine; by PKG/PRKG1; in vitro. Residues alanine 32–threonine 53 are disordered. At serine 45 the chain carries Phosphoserine. Threonine 49 is modified (phosphothreonine). One can recognise a Rap-GAP domain in the interval isoleucine 248–leucine 464. Serine 507 carries the phosphoserine modification. The segment at glutamate 509–histidine 533 is disordered. 5 positions are modified to phosphoserine: serine 544, serine 558, serine 564, serine 612, and serine 613. Positions valine 552–histidine 730 are disordered. Positions aspartate 585–serine 613 are enriched in polar residues. The span at proline 618–glycine 631 shows a compositional bias: basic and acidic residues. A compositionally biased stretch (low complexity) spans serine 635 to threonine 647. A compositionally biased stretch (polar residues) spans glycine 661–phenylalanine 670. Residues serine 678–serine 687 are compositionally biased toward low complexity. A compositionally biased stretch (polar residues) spans arginine 699–serine 712.

Post-translationally, in vitro phosphorylated by cGMP-dependent protein kinase 1 (cGKI) at Ser-7; the phosphorylation probably does not regulate GAP activity. As to expression, isoform 1 and isoform 2 are expressed in platelets with isoform 2 being the predominant form. Expressed in lymphocytes, heart, testis and pancreas.

It is found in the cytoplasm. The protein localises to the perinuclear region. In terms of biological role, GTPase activator for the nuclear Ras-related regulatory protein RAP-1A (KREV-1), converting it to the putatively inactive GDP-bound state. In Homo sapiens (Human), this protein is Rap1 GTPase-activating protein 2 (RAP1GAP2).